The chain runs to 685 residues: Nucleolar protein 4 (685 aa).

Positions 1–21 (MEETIENVEVPSSNVSKQNDD) are disordered. Positions 26 to 103 (KTLFVRSIPQ…HILRVDIAKR (78 aa)) constitute an RRM 1 domain. The segment covering 106–123 (RSKKTSEVVEKSTPESSE) has biased composition (basic and acidic residues). The segment at 106 to 142 (RSKKTSEVVEKSTPESSEKITGQNNEDEDDADGEDSM) is disordered. The segment covering 130–140 (NEDEDDADGED) has biased composition (acidic residues). Residues 147 to 225 (PKLIIRNMPW…RKVAVDFAVQ (79 aa)) form the RRM 2 domain. Residues 231-242 (DYKKAQPEMNDK) show a composition bias toward basic and acidic residues. A disordered region spans residues 231 to 285 (DYKKAQPEMNDKDDNESGNEDAEENHDDEEDENEEEDRQVDQASKNKESKRKAQN). Positions 243-268 (DDNESGNEDAEENHDDEEDENEEEDR) are enriched in acidic residues. Ser-247 is subject to Phosphoserine. RRM domains follow at residues 290–383 (FSVF…PTLV) and 462–612 (TRLA…FAIE). Thr-379 carries the phosphothreonine modification. A compositionally biased stretch (basic residues) spans 622–631 (EQLKQARTKR). Residues 622–685 (EQLKQARTKR…FKRKRKHAKK (64 aa)) are disordered. The span at 645 to 672 (SENKKPKKEEATTPTNPDDKKMGDDIKR) shows a compositional bias: basic and acidic residues. A compositionally biased stretch (basic residues) spans 674-685 (IGFKRKRKHAKK).

In terms of assembly, interacts with NOP1.

It is found in the nucleus. It localises to the nucleolus. In terms of biological role, required for 60S ribosomal subunit synthesis. Probably involved in the processing of 27S rRNA to produce mature 25S rRNA. This Saccharomyces cerevisiae (strain ATCC 204508 / S288c) (Baker's yeast) protein is Nucleolar protein 4 (NOP4).